A 276-amino-acid polypeptide reads, in one-letter code: ADP-dependent (S)-NAD(P)H-hydrate dehydratase (276 aa).

In terms of domain architecture, YjeF C-terminal spans 7–274 (METLNSINIP…NEIPYAMKQL (268 aa)). (6S)-NADPHX-binding residues include alanine 42, glycine 105, and histidine 154. AMP is bound at residue glycine 216. Position 217 (aspartate 217) interacts with (6S)-NADPHX.

This sequence belongs to the NnrD/CARKD family. Homotetramer. The cofactor is Mg(2+).

It catalyses the reaction (6S)-NADHX + ADP = AMP + phosphate + NADH + H(+). The enzyme catalyses (6S)-NADPHX + ADP = AMP + phosphate + NADPH + H(+). Functionally, catalyzes the dehydration of the S-form of NAD(P)HX at the expense of ADP, which is converted to AMP. Together with NAD(P)HX epimerase, which catalyzes the epimerization of the S- and R-forms, the enzyme allows the repair of both epimers of NAD(P)HX, a damaged form of NAD(P)H that is a result of enzymatic or heat-dependent hydration. This chain is ADP-dependent (S)-NAD(P)H-hydrate dehydratase, found in Staphylococcus aureus (strain NCTC 8325 / PS 47).